Here is a 442-residue protein sequence, read N- to C-terminus: Proline--tRNA ligase (442 aa).

This sequence belongs to the class-II aminoacyl-tRNA synthetase family. ProS type 2 subfamily. In terms of assembly, homodimer.

It is found in the cytoplasm. It catalyses the reaction tRNA(Pro) + L-proline + ATP = L-prolyl-tRNA(Pro) + AMP + diphosphate. Its function is as follows. Catalyzes the attachment of proline to tRNA(Pro) in a two-step reaction: proline is first activated by ATP to form Pro-AMP and then transferred to the acceptor end of tRNA(Pro). The polypeptide is Proline--tRNA ligase (Chelativorans sp. (strain BNC1)).